Reading from the N-terminus, the 641-residue chain is Ribosomal oxygenase 1 (641 aa).

Met-1 carries the N-acetylmethionine modification. Disordered stretches follow at residues 1-35 (MDGL…LPLR) and 54-80 (RTQT…DALP). Positions 12–23 (RRGRPKRRRKPQ) are enriched in basic residues. Residues Ser-60, Ser-63, and Ser-109 each carry the phosphoserine modification. A JmjC domain is found at 294–439 (CSLRLLCPQA…DFLEAILPLA (146 aa)). His-340, Asp-342, and His-405 together coordinate Fe cation.

Belongs to the ROX family. NO66 subfamily. In terms of assembly, interacts with SP7/OSX; the interaction is direct. Interacts with MYC. Interacts with PHF19; leading to its recruitment to H3K36me3 sites. Fe(2+) serves as cofactor. In terms of tissue distribution, widely expressed. Overexpressed in lung carcinomas.

It localises to the nucleus. The protein resides in the nucleolus. Its subcellular location is the nucleoplasm. The catalysed reaction is N(6),N(6)-dimethyl-L-lysyl(36)-[histone H3] + 2 2-oxoglutarate + 2 O2 = L-lysyl(36)-[histone H3] + 2 formaldehyde + 2 succinate + 2 CO2. The enzyme catalyses N(6)-methyl-L-lysyl-[protein] + 2-oxoglutarate + O2 = L-lysyl-[protein] + formaldehyde + succinate + CO2. It catalyses the reaction L-histidyl-[protein] + 2-oxoglutarate + O2 = (3S)-3-hydroxy-L-histidyl-[protein] + succinate + CO2. Its function is as follows. Oxygenase that can act as both a histone lysine demethylase and a ribosomal histidine hydroxylase. Specifically demethylates 'Lys-4' (H3K4me) and 'Lys-36' (H3K36me) of histone H3, thereby playing a central role in histone code. Preferentially demethylates trimethylated H3 'Lys-4' (H3K4me3) and monomethylated H3 'Lys-4' (H3K4me1) residues, while it has weaker activity for dimethylated H3 'Lys-36' (H3K36me2). Acts as a regulator of osteoblast differentiation via its interaction with SP7/OSX by demethylating H3K4me and H3K36me, thereby inhibiting SP7/OSX-mediated promoter activation. Also catalyzes demethylation of non-histone proteins, such as CGAS: demethylation of monomethylated CGAS promotes interaction between CGAS and PARP1, followed by PARP1 inactivation. Also catalyzes the hydroxylation of 60S ribosomal protein L8 on 'His-216', thereby playing a role in ribosome biogenesis. Participates in MYC-induced transcriptional activation. The polypeptide is Ribosomal oxygenase 1 (Homo sapiens (Human)).